The chain runs to 359 residues: tRNA/tmRNA (uracil-C(5))-methyltransferase (359 aa).

Residues Gln183, Tyr211, Asn216, Glu232, and Asp292 each contribute to the S-adenosyl-L-methionine site. The active-site Nucleophile is Cys317. Catalysis depends on Glu351, which acts as the Proton acceptor.

It belongs to the class I-like SAM-binding methyltransferase superfamily. RNA M5U methyltransferase family. TrmA subfamily.

The enzyme catalyses uridine(54) in tRNA + S-adenosyl-L-methionine = 5-methyluridine(54) in tRNA + S-adenosyl-L-homocysteine + H(+). It catalyses the reaction uridine(341) in tmRNA + S-adenosyl-L-methionine = 5-methyluridine(341) in tmRNA + S-adenosyl-L-homocysteine + H(+). Functionally, dual-specificity methyltransferase that catalyzes the formation of 5-methyluridine at position 54 (m5U54) in all tRNAs, and that of position 341 (m5U341) in tmRNA (transfer-mRNA). The polypeptide is tRNA/tmRNA (uracil-C(5))-methyltransferase (Pseudomonas fluorescens (strain Pf0-1)).